Here is a 343-residue protein sequence, read N- to C-terminus: Oxygen-dependent coproporphyrinogen-III oxidase (343 aa).

A substrate-binding site is contributed by Ser99. Positions 103 and 113 each coordinate a divalent metal cation. The Proton donor role is filled by His113. Substrate is bound at residue 115–117; the sequence is NYR. Positions 147 and 177 each coordinate a divalent metal cation. Residues 267–302 are important for dimerization; that stretch reads YVEFNLVWDRGTIFGLQTNGRTESILMSLPPLARWE.

It belongs to the aerobic coproporphyrinogen-III oxidase family. In terms of assembly, homodimer. It depends on a divalent metal cation as a cofactor.

The protein localises to the cytoplasm. It catalyses the reaction coproporphyrinogen III + O2 + 2 H(+) = protoporphyrinogen IX + 2 CO2 + 2 H2O. Its pathway is porphyrin-containing compound metabolism; protoporphyrin-IX biosynthesis; protoporphyrinogen-IX from coproporphyrinogen-III (O2 route): step 1/1. Involved in the heme and chlorophyll biosynthesis. Catalyzes the aerobic oxidative decarboxylation of propionate groups of rings A and B of coproporphyrinogen-III to yield the vinyl groups in protoporphyrinogen-IX. This Prochlorococcus marinus (strain SARG / CCMP1375 / SS120) protein is Oxygen-dependent coproporphyrinogen-III oxidase.